We begin with the raw amino-acid sequence, 270 residues long: Acyl-[acyl-carrier-protein]--UDP-N-acetylglucosamine O-acyltransferase (270 aa).

It belongs to the transferase hexapeptide repeat family. LpxA subfamily. In terms of assembly, homotrimer.

It is found in the cytoplasm. The catalysed reaction is a (3R)-hydroxyacyl-[ACP] + UDP-N-acetyl-alpha-D-glucosamine = a UDP-3-O-[(3R)-3-hydroxyacyl]-N-acetyl-alpha-D-glucosamine + holo-[ACP]. The protein operates within glycolipid biosynthesis; lipid IV(A) biosynthesis; lipid IV(A) from (3R)-3-hydroxytetradecanoyl-[acyl-carrier-protein] and UDP-N-acetyl-alpha-D-glucosamine: step 1/6. Functionally, involved in the biosynthesis of lipid A, a phosphorylated glycolipid that anchors the lipopolysaccharide to the outer membrane of the cell. This is Acyl-[acyl-carrier-protein]--UDP-N-acetylglucosamine O-acyltransferase from Bartonella tribocorum (strain CIP 105476 / IBS 506).